The chain runs to 358 residues: L-Ala-D/L-Glu epimerase (358 aa).

Residues R24, T135, and K160 each coordinate substrate. K162 serves as the catalytic Proton acceptor; specific for (R)-substrate epimerization. The Mg(2+) site is built by D190, E218, and D243. K267 (proton acceptor; specific for (S)-substrate epimerization) is an active-site residue. C295, D320, and D322 together coordinate substrate.

Belongs to the mandelate racemase/muconate lactonizing enzyme family. The cofactor is Mg(2+).

It catalyses the reaction L-alanyl-L-glutamate = L-alanyl-D-glutamate. The protein operates within cell wall degradation; peptidoglycan degradation. Catalyzes the epimerization of L-Ala-D-Glu to L-Ala-L-Glu and has probably a role in the metabolism of the murein peptide, of which L-Ala-D-Glu is a component. Is also able to catalyze the epimerization of L-Ala-D-Asp. This Clostridium acetobutylicum (strain ATCC 824 / DSM 792 / JCM 1419 / IAM 19013 / LMG 5710 / NBRC 13948 / NRRL B-527 / VKM B-1787 / 2291 / W) protein is L-Ala-D/L-Glu epimerase.